Reading from the N-terminus, the 597-residue chain is Apurinic-apyrimidinic endonuclease 1 (597 aa).

The segment covering 232–246 has biased composition (polar residues); that stretch reads YNNDTKYLSNPKGVT. The disordered stretch occupies residues 232 to 296; that stretch reads YNNDTKYLSN…IPPIPKNTED (65 aa). Over residues 265 to 274 the composition is skewed to low complexity; it reads NNNNNNNNNK. Residues His-380, His-420, Glu-456, Asp-490, His-493, His-527, Asp-540, His-542, and Glu-572 each coordinate Zn(2+). His-493 provides a ligand contact to Mn(2+). Mn(2+)-binding residues include Asp-540 and His-542.

This sequence belongs to the AP endonuclease 2 family. The cofactor is Zn(2+). It depends on Mn(2+) as a cofactor. In terms of processing, may be proteolytically cleaved into a 59 kDa form.

It is found in the mitochondrion. Apurinic/apyrimidinic (AP) endonuclease activity is enhanced with increasing concentrations of Mn(2+), while Zn(2+) initially enhances activity but subsequently inhibits activity in a concentration-dependent manner. Co(2+) inhibits apurinic/apyrimidinic (AP) endonuclease activity at concentrations greater than 2.5 mM. Plays a role in mitochondrial DNA base excision repair (BER) pathway induced by oxidative stress. Has apurinic/apyrimidinic (AP) endonuclease activity towards double-stranded DNA (dsDNA) with a preference for C as opposite base. Has 3'-phosphatase activity; removes 3'-phosphate from blunt-end, recessed, and gapped DNA templates and thus, removes 3'-blocks for DNA polymerase activity during BER. Lacks 3'-5' exonuclease activity and does not cleave damaged bases by nucleotide incision repair (NIR). The protein is Apurinic-apyrimidinic endonuclease 1 of Plasmodium falciparum (isolate 3D7).